Here is a 320-residue protein sequence, read N- to C-terminus: Lipoyl synthase (320 aa).

Positions 1–29 are disordered; that stretch reads MVTVVDRVTNRRLRHPEKAHRPDTSVQKK. Basic and acidic residues predominate over residues 19-29; that stretch reads AHRPDTSVQKK. The [4Fe-4S] cluster site is built by C59, C64, C70, C85, C89, C92, and S298. The region spanning 71-287 is the Radical SAM core domain; that stretch reads WSQRHASFMI…AKIGKVKGFL (217 aa).

This sequence belongs to the radical SAM superfamily. Lipoyl synthase family. Requires [4Fe-4S] cluster as cofactor.

The protein resides in the cytoplasm. It carries out the reaction [[Fe-S] cluster scaffold protein carrying a second [4Fe-4S](2+) cluster] + N(6)-octanoyl-L-lysyl-[protein] + 2 oxidized [2Fe-2S]-[ferredoxin] + 2 S-adenosyl-L-methionine + 4 H(+) = [[Fe-S] cluster scaffold protein] + N(6)-[(R)-dihydrolipoyl]-L-lysyl-[protein] + 4 Fe(3+) + 2 hydrogen sulfide + 2 5'-deoxyadenosine + 2 L-methionine + 2 reduced [2Fe-2S]-[ferredoxin]. The protein operates within protein modification; protein lipoylation via endogenous pathway; protein N(6)-(lipoyl)lysine from octanoyl-[acyl-carrier-protein]: step 2/2. Catalyzes the radical-mediated insertion of two sulfur atoms into the C-6 and C-8 positions of the octanoyl moiety bound to the lipoyl domains of lipoate-dependent enzymes, thereby converting the octanoylated domains into lipoylated derivatives. The chain is Lipoyl synthase from Bartonella tribocorum (strain CIP 105476 / IBS 506).